The following is a 342-amino-acid chain: Succinylglutamate desuccinylase (342 aa).

Residues His-63, Glu-66, and His-159 each coordinate Zn(2+). The active site involves Glu-222.

This sequence belongs to the AspA/AstE family. Succinylglutamate desuccinylase subfamily. It depends on Zn(2+) as a cofactor.

It catalyses the reaction N-succinyl-L-glutamate + H2O = L-glutamate + succinate. The protein operates within amino-acid degradation; L-arginine degradation via AST pathway; L-glutamate and succinate from L-arginine: step 5/5. Its function is as follows. Transforms N(2)-succinylglutamate into succinate and glutamate. The protein is Succinylglutamate desuccinylase of Paraburkholderia xenovorans (strain LB400).